Consider the following 204-residue polypeptide: uncharacterized protein (204 aa).

The tract at residues 47–108 is disordered; it reads TDSSDDEGGA…EDSDEEGEGG (62 aa). Acidic residues predominate over residues 49-106; the sequence is SSDDEGGASSGDEGEASSDDEGDASSDDEEEASSDGEGVVEDEETLDAEGEDSDEEGE.

Its subcellular location is the mitochondrion. This is an uncharacterized protein from Paramecium tetraurelia.